Reading from the N-terminus, the 318-residue chain is GTP cyclohydrolase MptA (318 aa).

Belongs to the GTP cyclohydrolase IV family. In terms of assembly, homodimer. Requires Fe(2+) as cofactor.

It carries out the reaction GTP + H2O = 7,8-dihydroneopterin 2',3'-cyclic phosphate + formate + diphosphate + H(+). The protein operates within cofactor biosynthesis; 5,6,7,8-tetrahydromethanopterin biosynthesis. Converts GTP to 7,8-dihydro-D-neopterin 2',3'-cyclic phosphate, the first intermediate in the biosynthesis of coenzyme methanopterin. The protein is GTP cyclohydrolase MptA of Methanosarcina mazei (strain ATCC BAA-159 / DSM 3647 / Goe1 / Go1 / JCM 11833 / OCM 88) (Methanosarcina frisia).